Consider the following 207-residue polypeptide: Infectivity protein P11 (207 aa).

The helical transmembrane segment at 13 to 28 (WWIVAAIGGLAAFLLL) threads the bilayer. Positions 64 to 95 (AALQANTQLSAQNAQLQAQMDASRLQLETQLN) form a coiled coil.

The protein localises to the virion membrane. In terms of biological role, component of the phage ejection machinery. Pilot protein for the formation of the tube that conducts the genome into the target cell. Probably involved in penetration of the bacterial outer membrane and for making the peptidoglycan layer accessible to the viral transglycosylase. Essential for viral infectivity. The sequence is that of Infectivity protein P11 (XI) from Enterobacteria phage PRD1 (Bacteriophage PRD1).